We begin with the raw amino-acid sequence, 338 residues long: Large ribosomal subunit protein uL3 (338 aa).

The tract at residues 230-253 (HRKGHRRTGTIGPQAPALMFTQPR) is disordered.

The protein belongs to the universal ribosomal protein uL3 family. As to quaternary structure, part of the 50S ribosomal subunit. Forms a cluster with proteins L14 and L24e.

Its function is as follows. One of the primary rRNA binding proteins, it binds directly near the 3'-end of the 23S rRNA, where it nucleates assembly of the 50S subunit. This is Large ribosomal subunit protein uL3 from Pyrobaculum neutrophilum (strain DSM 2338 / JCM 9278 / NBRC 100436 / V24Sta) (Thermoproteus neutrophilus).